We begin with the raw amino-acid sequence, 738 residues long: Ethylene receptor (738 aa).

3 helical membrane-spanning segments follow: residues 23–43 (ISDF…IYFV), 54–74 (VLVQ…INLW), and 89–109 (IAKV…VHII). 2 residues coordinate Cu cation: cysteine 65 and histidine 69. A GAF domain is found at 158 to 307 (DRHTILRTTL…VVADQVAVAL (150 aa)). Residues 350–589 (VMNHEMRTPM…IFIVKLGIPE (240 aa)) form the Histidine kinase domain. Histidine 353 carries the post-translational modification Phosphohistidine; by autocatalysis. One can recognise a Response regulatory domain in the interval 615-730 (KVLLMDDNGV…KMRSVLSDLL (116 aa)). At aspartate 663 the chain carries 4-aspartylphosphate.

Belongs to the ethylene receptor family. Homodimer; disulfide-linked. It depends on Cu cation as a cofactor. Post-translationally, activation probably requires a transfer of a phosphate group between a His in the transmitter domain and an Asp of the receiver domain. Higher expression in arils than in seeds.

It localises to the endoplasmic reticulum membrane. It carries out the reaction ATP + protein L-histidine = ADP + protein N-phospho-L-histidine.. Functionally, may act early in the ethylene signal transduction pathway, possibly as an ethylene receptor, or as a regulator of the pathway. The chain is Ethylene receptor (ETR1) from Passiflora edulis (Passion fruit).